A 228-amino-acid chain; its full sequence is MPVKGGTKCIKYLLFGFNFIFWLAGIAVLAIGLWLRFDSQTKSIFEQETNNNNSSFYTGVYILIGAGALMMLVGFLGCCGAVQESQCMLGLFFGFLLVIFAIEIAAAIWGYSHKDEVIKEVQEFYKDTYNKLKTKDEPQRETLKAIHYALDCCGLAGGVEQFISDICPKKDVLETFTIKSCPDAIKEVFDNKFHIIGAVGIGIAVVMIFGMIFSMILCCAIRRNREMV.

At 1–12 the chain is on the cytoplasmic side; sequence MPVKGGTKCIKY. Cys9 carries S-palmitoyl cysteine lipidation. The helical transmembrane segment at 13–33 threads the bilayer; sequence LLFGFNFIFWLAGIAVLAIGL. Residues 34 to 55 are Extracellular-facing; it reads WLRFDSQTKSIFEQETNNNNSS. N-linked (GlcNAc...) asparagine glycans are attached at residues Asn52 and Asn53. The helical transmembrane segment at 56–76 threads the bilayer; that stretch reads FYTGVYILIGAGALMMLVGFL. Topologically, residues 77 to 87 are cytoplasmic; it reads GCCGAVQESQC. Residues Cys78, Cys79, and Cys87 are each lipidated (S-palmitoyl cysteine). A helical transmembrane segment spans residues 88–111; the sequence is MLGLFFGFLLVIFAIEIAAAIWGY. The Extracellular segment spans residues 112 to 195; sequence SHKDEVIKEV…KEVFDNKFHI (84 aa). Intrachain disulfides connect Cys152/Cys181 and Cys153/Cys167. Residues 196–221 form a helical membrane-spanning segment; it reads IGAVGIGIAVVMIFGMIFSMILCCAI. Residues Cys218 and Cys219 are each lipidated (S-palmitoyl cysteine). At 222–228 the chain is on the cytoplasmic side; sequence RRNREMV.

It belongs to the tetraspanin (TM4SF) family. As to quaternary structure, forms both disulfide-linked homodimers and higher homooligomers as well as heterooligomers with other members of the tetraspanin family. Interacts (via the second extracellular domain) with integrin ITGAV:ITGB3. Interacts with integrin ITGA6:ITGB1; interaction takes place in oocytes and is involved in sperm-egg fusion. Part of integrin-tetraspanin complexes composed of CD81, beta-1 and beta-2 integrins in the membrane of monocyte/macrophages. Interacts with CD63; identified in a complex with CD63 and ITGB3. Associates with CR2/CD21 and with PTGFRN/CD9P1. Part of a complex composed of CD9, CD81, PTGFRN and IGSF8. Interacts directly with IGSF8. Interacts with PDPN; this interaction is homophilic and attenuates platelet aggregation and pulmonary metastasis induced by PDPN. Interacts (on T cell side) with CD81 at immunological synapses between antigen-presenting cells and T cells. Palmitoylated at a low, basal level in unstimulated platelets. The level of palmitoylation increases when platelets are activated by thrombin (in vitro). The protein exists in three forms with molecular masses between 22 and 27 kDa, and is known to carry covalently linked fatty acids. Palmitoylation by ZDHHC2 regulates CD9 expression, association with other tetraspanin family proteins and function in cell adhesion.

The protein localises to the cell membrane. It localises to the membrane. The protein resides in the secreted. Its subcellular location is the extracellular exosome. Its function is as follows. Integral membrane protein associated with integrins, which regulates different processes, such as sperm-egg fusion, platelet activation and aggregation, and cell adhesion. Present at the cell surface of oocytes and plays a key role in sperm-egg fusion, possibly by organizing multiprotein complexes and the morphology of the membrane required for the fusion. In myoblasts, associates with CD81 and PTGFRN and inhibits myotube fusion during muscle regeneration. In macrophages, associates with CD81 and beta-1 and beta-2 integrins, and prevents macrophage fusion into multinucleated giant cells specialized in ingesting complement-opsonized large particles. Also prevents the fusion between mononuclear cell progenitors into osteoclasts in charge of bone resorption. Acts as a receptor for PSG17. Involved in platelet activation and aggregation. Regulates paranodal junction formation. Involved in cell adhesion, cell motility and tumor metastasis. The protein is CD9 antigen of Chlorocebus aethiops (Green monkey).